Consider the following 310-residue polypeptide: Putative S-adenosyl-L-methionine-dependent methyltransferase MUL_4762 (310 aa).

S-adenosyl-L-methionine contacts are provided by residues Asp132 and 161 to 162 (DL).

Belongs to the UPF0677 family.

Its function is as follows. Exhibits S-adenosyl-L-methionine-dependent methyltransferase activity. The chain is Putative S-adenosyl-L-methionine-dependent methyltransferase MUL_4762 from Mycobacterium ulcerans (strain Agy99).